Here is a 955-residue protein sequence, read N- to C-terminus: Alpha-1,4 glucan phosphorylase L isozyme, chloroplastic/amyloplastic (955 aa).

The transit peptide at Met1 to Val43 directs the protein to the chloroplast. Residues Lys522–Ile550 form a disordered region. Positions Glu528–Pro545 are enriched in acidic residues. N6-(pyridoxal phosphate)lysine is present on Lys801.

The protein belongs to the glycogen phosphorylase family. The cofactor is pyridoxal 5'-phosphate.

The protein resides in the plastid. Its subcellular location is the chloroplast. It is found in the amyloplast. The enzyme catalyses [(1-&gt;4)-alpha-D-glucosyl](n) + phosphate = [(1-&gt;4)-alpha-D-glucosyl](n-1) + alpha-D-glucose 1-phosphate. Functionally, phosphorylase is an important allosteric enzyme in carbohydrate metabolism. Enzymes from different sources differ in their regulatory mechanisms and in their natural substrates. However, all known phosphorylases share catalytic and structural properties. The chain is Alpha-1,4 glucan phosphorylase L isozyme, chloroplastic/amyloplastic from Ipomoea batatas (Sweet potato).